The following is a 279-amino-acid chain: Nitrate import permease protein NrtB (279 aa).

A run of 5 helical transmembrane segments spans residues 25–45 (FLPYVVCLPIFLAIWQVISAI), 91–111 (VAIGYLLAACTGILVGGVLGM), 149–169 (AIFVIFITAIWPIIINTAVGI), 200–220 (VPYVFAGLRIAVGLAWLAIVA), and 249–269 (IILAIFYVGLVGLSLDRLVAW). One can recognise an ABC transmembrane type-1 domain in the interval 84–267 (ILISLQRVAI…LVGLSLDRLV (184 aa)).

It belongs to the binding-protein-dependent transport system permease family. CysTW subfamily. The complex is composed of two ATP-binding proteins (NrtC and NrtD), two transmembrane proteins (NrtB) and a solute-binding protein (NrtA).

It is found in the cell inner membrane. Functionally, part of the ABC transporter complex NrtABCD involved in nitrate uptake. The complex is probably also involved in nitrite transport. Probably responsible for the translocation of the substrate across the membrane. This is Nitrate import permease protein NrtB from Synechococcus elongatus (strain ATCC 33912 / PCC 7942 / FACHB-805) (Anacystis nidulans R2).